The chain runs to 241 residues: Uridylate kinase (241 aa).

An ATP-binding site is contributed by 11–14 (KFSG). The involved in allosteric activation by GTP stretch occupies residues 19–24 (GENGFG). G53 contacts UMP. 2 residues coordinate ATP: G54 and R58. UMP contacts are provided by residues D74 and 135–142 (TGNPFFTT). ATP contacts are provided by T162, Y168, and D171.

It belongs to the UMP kinase family. In terms of assembly, homohexamer.

The protein resides in the cytoplasm. The enzyme catalyses UMP + ATP = UDP + ADP. Its pathway is pyrimidine metabolism; CTP biosynthesis via de novo pathway; UDP from UMP (UMPK route): step 1/1. Its activity is regulated as follows. Allosterically activated by GTP. Inhibited by UTP. Functionally, catalyzes the reversible phosphorylation of UMP to UDP. The protein is Uridylate kinase of Wolinella succinogenes (strain ATCC 29543 / DSM 1740 / CCUG 13145 / JCM 31913 / LMG 7466 / NCTC 11488 / FDC 602W) (Vibrio succinogenes).